A 98-amino-acid chain; its full sequence is Co-chaperonin GroES (98 aa).

This sequence belongs to the GroES chaperonin family. Heptamer of 7 subunits arranged in a ring. Interacts with the chaperonin GroEL.

It is found in the cytoplasm. Functionally, together with the chaperonin GroEL, plays an essential role in assisting protein folding. The GroEL-GroES system forms a nano-cage that allows encapsulation of the non-native substrate proteins and provides a physical environment optimized to promote and accelerate protein folding. GroES binds to the apical surface of the GroEL ring, thereby capping the opening of the GroEL channel. The polypeptide is Co-chaperonin GroES (Bartonella tribocorum (strain CIP 105476 / IBS 506)).